The sequence spans 165 residues: MPEHLNARVEACYRQAEHFFQRSFPRPTVSFRLRGQKAGVAHLDENLLRFNPQLYRENREHFLEQTVAHEVAHLIAHQLFGPRIRPHGEEWQLIMRGIYGLPPDRCHTYAVKRRATTRYLYRCHCPEHNDFPFSPQRHTLVAKGRRYYCRRCKATLVFTGEVLRE.

One can recognise a SprT-like domain in the interval 10 to 158 (EACYRQAEHF…CRRCKATLVF (149 aa)). His69 provides a ligand contact to Zn(2+). Residue Glu70 is part of the active site. His73 provides a ligand contact to Zn(2+).

The protein belongs to the SprT family. It depends on Zn(2+) as a cofactor.

The protein resides in the cytoplasm. In Pseudomonas aeruginosa (strain LESB58), this protein is Protein SprT.